Consider the following 443-residue polypeptide: ATP-dependent protease ATPase subunit HslU (443 aa).

Residues I18, 60–65 (GVGKTE), D256, E321, and R393 contribute to the ATP site.

The protein belongs to the ClpX chaperone family. HslU subfamily. In terms of assembly, a double ring-shaped homohexamer of HslV is capped on each side by a ring-shaped HslU homohexamer. The assembly of the HslU/HslV complex is dependent on binding of ATP.

It localises to the cytoplasm. Its function is as follows. ATPase subunit of a proteasome-like degradation complex; this subunit has chaperone activity. The binding of ATP and its subsequent hydrolysis by HslU are essential for unfolding of protein substrates subsequently hydrolyzed by HslV. HslU recognizes the N-terminal part of its protein substrates and unfolds these before they are guided to HslV for hydrolysis. This Escherichia coli O139:H28 (strain E24377A / ETEC) protein is ATP-dependent protease ATPase subunit HslU.